Reading from the N-terminus, the 153-residue chain is Ribosomal RNA large subunit methyltransferase H (153 aa).

Residues Leu-71 and Gly-102 each coordinate S-adenosyl-L-methionine.

The protein belongs to the RNA methyltransferase RlmH family. Homodimer.

It is found in the cytoplasm. The catalysed reaction is pseudouridine(1915) in 23S rRNA + S-adenosyl-L-methionine = N(3)-methylpseudouridine(1915) in 23S rRNA + S-adenosyl-L-homocysteine + H(+). Functionally, specifically methylates the pseudouridine at position 1915 (m3Psi1915) in 23S rRNA. The sequence is that of Ribosomal RNA large subunit methyltransferase H from Anaeromyxobacter sp. (strain K).